The chain runs to 224 residues: Germin-like protein 8-10 (224 aa).

Positions 1–22 (MASPSICLLAALLALVSWQAIA) are cleaved as a signal peptide. A disulfide bridge links C32 with C47. Residues 62–212 (AMLDTPRKTN…AFQVEKGTID (151 aa)) enclose the Cupin type-1 domain. The N-linked (GlcNAc...) asparagine glycan is linked to N76. 3 residues coordinate Mn(2+): H109, H111, and E116. N135 carries an N-linked (GlcNAc...) asparagine glycan. H157 lines the Mn(2+) pocket.

It belongs to the germin family. As to quaternary structure, oligomer (believed to be a pentamer but probably hexamer).

It localises to the secreted. Its subcellular location is the extracellular space. The protein resides in the apoplast. Its function is as follows. Plays a role in broad-spectrum disease resistance. Probably has no oxalate oxidase activity even if the active site is conserved. This is Germin-like protein 8-10 (GLP2) from Oryza sativa subsp. japonica (Rice).